The chain runs to 69 residues: Photosystem I reaction center subunit IV (69 aa).

It belongs to the PsaE family.

It localises to the cellular thylakoid membrane. Its function is as follows. Stabilizes the interaction between PsaC and the PSI core, assists the docking of the ferredoxin to PSI and interacts with ferredoxin-NADP oxidoreductase. The chain is Photosystem I reaction center subunit IV from Prochlorococcus marinus (strain MIT 9515).